The chain runs to 124 residues: Putative RNA polymerase II transcriptional coactivator (124 aa).

Residues 1 to 61 (MSSSSSSEDE…GRLKDSDGNE (61 aa)) are disordered. 2 stretches are compositionally biased toward basic and acidic residues: residues 11–21 (LEKKVTKEQKK) and 39–58 (QEVK…KDSD).

Belongs to the transcriptional coactivator PC4 family.

The protein resides in the nucleus. In terms of biological role, general coactivator that functions cooperatively with TAFs and mediates functional interactions between upstream activators and the general transcriptional machinery. Binds single-stranded DNA. The protein is Putative RNA polymerase II transcriptional coactivator of Caenorhabditis elegans.